Here is a 307-residue protein sequence, read N- to C-terminus: MQKFDVKTFQGLILQLQDYWSRQGCTIIQPLDMEVGAGTSHPMTCLRALGPEPIACAYVQPSRRPTDGRYGENPNRLQHYYQFQVIIKPSPDNIQELYLGSLKELGMDPEIHDIRFVEDNWENPTLGAWGLGWEVWLNGMEVTQFTYFQQVGGLECKPVTGEITYGLERLAMYIQGVDSVYDLVWSDGPLGKTTYGDVFHQNEVEQSTYNFEHADVDFLFHCFEQYEKEAQHLLALETPLPLPAYERILKAAHSFNLLDARKAISVTERQRYILRIRTLTKAVAEAYYASREALGFPMCKRTENKQG.

Belongs to the class-II aminoacyl-tRNA synthetase family. Tetramer of two alpha and two beta subunits.

The protein resides in the cytoplasm. The catalysed reaction is tRNA(Gly) + glycine + ATP = glycyl-tRNA(Gly) + AMP + diphosphate. This is Glycine--tRNA ligase alpha subunit from Aeromonas salmonicida (strain A449).